Here is a 612-residue protein sequence, read N- to C-terminus: Vitamin B12 transporter BtuB (612 aa).

Positions 1 to 20 (MIKKSLLCTALSVTAFSGWA) are cleaved as a signal peptide. The TonB box motif lies at 26–33 (DTLVVTAN). Positions 38 to 152 (PRSAVLAPIT…IGGVVNIITT (115 aa)) constitute a TBDR plug domain. Cyanocob(III)alamin contacts are provided by residues Ser85, Asn92, and 110–111 (VS). The TBDR beta-barrel domain maps to 155 to 612 (KPGTELTAGV…EYTLSGSYTF (458 aa)). The next 3 beta stranded transmembrane spans lie at 158 to 165 (TELTAGVG), 169 to 178 (YQNYDVSTQQ), and 184 to 195 (TRVTLMGDYAYT). Asp199, Gln211, Asp213, and Asp215 together coordinate Ca(2+). Beta stranded transmembrane passes span 217–227 (FLSKTLYGALE) and 232–248 (DTWS…NRTN). Positions 249, 250, and 261 each coordinate Ca(2+). The next 14 membrane-spanning stretches (beta stranded) occupy residues 263–277 (RKLY…LRFN), 279–296 (ELIQ…KDYN), 309–325 (TLDE…NSIV), 328–337 (HGNVGAGVDW), 353–369 (YDQR…QQLG), 371–381 (FTFEGAARSDD), 385–400 (FGRH…WEFI), 403–417 (YRFI…KAPN), 434–443 (QSKQWEGAFE), 449–458 (VNWRVSGYRN), 473–490 (YFNE…TANF), 494–509 (PLAH…SRNA), 517–529 (RRSK…QLDW), and 535–550 (DWGL…YDTD). Residue Thr309 coordinates cyanocob(III)alamin. Position 517 (Arg517) interacts with cyanocob(III)alamin. A cyanocob(III)alamin-binding site is contributed by Tyr551. A run of 3 beta stranded transmembrane segments spans residues 556 to 570 (PVKM…LAVS), 583 to 594 (IANRFDKDYETV), and 600 to 612 (AGRE…SYTF). The TonB C-terminal box signature appears at 595–612 (YGYATAGREYTLSGSYTF).

The protein belongs to the TonB-dependent receptor family. BtuB (TC 1.B.14.3.1) subfamily.

The protein localises to the cell outer membrane. Involved in the active translocation of vitamin B12 (cyanocobalamin) across the outer membrane to the periplasmic space. It derives its energy for transport by interacting with the trans-periplasmic membrane protein TonB. This Citrobacter freundii protein is Vitamin B12 transporter BtuB.